The chain runs to 111 residues: Large ribosomal subunit protein uL23 (111 aa).

Belongs to the universal ribosomal protein uL23 family. In terms of assembly, part of the 50S ribosomal subunit. Contacts protein L29, and trigger factor when it is bound to the ribosome.

Functionally, one of the early assembly proteins it binds 23S rRNA. One of the proteins that surrounds the polypeptide exit tunnel on the outside of the ribosome. Forms the main docking site for trigger factor binding to the ribosome. The chain is Large ribosomal subunit protein uL23 from Chlamydia trachomatis serovar A (strain ATCC VR-571B / DSM 19440 / HAR-13).